Here is a 168-residue protein sequence, read N- to C-terminus: Ribosome maturation factor RimP (168 aa).

Belongs to the RimP family.

It localises to the cytoplasm. Required for maturation of 30S ribosomal subunits. The polypeptide is Ribosome maturation factor RimP (Rickettsia bellii (strain OSU 85-389)).